We begin with the raw amino-acid sequence, 1077 residues long: Adenylate cyclase type 4 (1077 aa).

Topologically, residues 1–28 (MARLFSPRPPPSEDLFYETYYSLSQQYP) are cytoplasmic. Helical transmembrane passes span 29-50 (LLLL…VAWA), 61-80 (FLTT…GLAS), 94-117 (GLVW…VSAW), 120-138 (VSYF…PLGM), 141-162 (AAVA…YLGP), and 170-190 (LLPQ…AGVY). Over 191 to 585 (HKALMERALR…YRLSAIPAFK (395 aa)) the chain is Cytoplasmic. Residues aspartate 278, isoleucine 279, and aspartate 322 each contribute to the Mg(2+) site. Residues 278–283 (DIVGFT), 320–322 (LGD), and arginine 366 each bind ATP. Serine 520 carries the phosphoserine modification. Threonine 536 is modified (phosphothreonine). 3 consecutive transmembrane segments (helical) span residues 586-607 (YYEA…LVTN), 611-633 (ALAI…CFSE), and 664-687 (IALG…FFPT). Residues 688–714 (SSDCPFQAPNVSSMISNLSWELPGSLP) are Extracellular-facing. 2 N-linked (GlcNAc...) asparagine glycosylation sites follow: asparagine 697 and asparagine 704. A run of 3 helical transmembrane segments spans residues 715–736 (LISV…SLFL), 744–764 (LLLL…SHAW), and 791–807 (MGAI…LVLA). The Cytoplasmic portion of the chain corresponds to 808–1077 (RQNEYYCRLD…RTGPPSATLG (270 aa)). ATP contacts are provided by residues lysine 925, 1005-1007 (DIW), 1012-1016 (NVASR), and lysine 1052.

The protein belongs to the adenylyl cyclase class-4/guanylyl cyclase family. The cofactor is Mg(2+). Mn(2+) serves as cofactor. As to expression, detected in the zona glomerulosa and the zona fasciculata in the adrenal gland (at protein level).

It is found in the cell membrane. The protein resides in the cytoplasm. It catalyses the reaction ATP = 3',5'-cyclic AMP + diphosphate. Its activity is regulated as follows. Activated by forskolin. Insensitive to calcium/calmodulin. Stimulated by GNAS and by the G-protein beta and gamma subunit complex. In terms of biological role, catalyzes the formation of the signaling molecule cAMP in response to G-protein signaling. The polypeptide is Adenylate cyclase type 4 (ADCY4) (Homo sapiens (Human)).